We begin with the raw amino-acid sequence, 333 residues long: Glycerol-3-phosphate dehydrogenase [NAD(P)+] (333 aa).

4 residues coordinate NADPH: serine 10, phenylalanine 11, arginine 31, and lysine 105. Sn-glycerol 3-phosphate-binding residues include lysine 105, glycine 136, and serine 138. Alanine 140 contacts NADPH. The sn-glycerol 3-phosphate site is built by lysine 191, aspartate 244, serine 254, arginine 255, and asparagine 256. Lysine 191 serves as the catalytic Proton acceptor. Position 255 (arginine 255) interacts with NADPH. The NADPH site is built by valine 279 and glutamate 281.

This sequence belongs to the NAD-dependent glycerol-3-phosphate dehydrogenase family.

It is found in the cytoplasm. The catalysed reaction is sn-glycerol 3-phosphate + NAD(+) = dihydroxyacetone phosphate + NADH + H(+). The enzyme catalyses sn-glycerol 3-phosphate + NADP(+) = dihydroxyacetone phosphate + NADPH + H(+). Its pathway is membrane lipid metabolism; glycerophospholipid metabolism. Its function is as follows. Catalyzes the reduction of the glycolytic intermediate dihydroxyacetone phosphate (DHAP) to sn-glycerol 3-phosphate (G3P), the key precursor for phospholipid synthesis. In Leptospira biflexa serovar Patoc (strain Patoc 1 / Ames), this protein is Glycerol-3-phosphate dehydrogenase [NAD(P)+].